The sequence spans 610 residues: Protein mono-ADP-ribosyltransferase PARP6 (610 aa).

The PARP catalytic domain maps to 374–600 (EMTQGSYLEI…QDPKIQKEIM (227 aa)). At aspartate 580 the chain carries ADP-ribosyl aspartic acid.

It belongs to the ARTD/PARP family. Post-translationally, auto-mono-ADP-ribosylated.

The catalysed reaction is L-aspartyl-[protein] + NAD(+) = 4-O-(ADP-D-ribosyl)-L-aspartyl-[protein] + nicotinamide. It carries out the reaction L-cysteinyl-[protein] + NAD(+) = S-(ADP-D-ribosyl)-L-cysteinyl-[protein] + nicotinamide + H(+). Functionally, mono-ADP-ribosyltransferase that mediates mono-ADP-ribosylation of target proteins. This Pongo abelii (Sumatran orangutan) protein is Protein mono-ADP-ribosyltransferase PARP6.